The chain runs to 332 residues: tRNA-dihydrouridine(20/20a) synthase (332 aa).

FMN is bound by residues 19–21 (PML) and Q71. The active-site Proton donor is C101. FMN contacts are provided by residues K140, H173, 213–215 (NGG), and 235–236 (GR).

The protein belongs to the Dus family. DusA subfamily. FMN is required as a cofactor.

It carries out the reaction 5,6-dihydrouridine(20) in tRNA + NADP(+) = uridine(20) in tRNA + NADPH + H(+). It catalyses the reaction 5,6-dihydrouridine(20) in tRNA + NAD(+) = uridine(20) in tRNA + NADH + H(+). The enzyme catalyses 5,6-dihydrouridine(20a) in tRNA + NADP(+) = uridine(20a) in tRNA + NADPH + H(+). The catalysed reaction is 5,6-dihydrouridine(20a) in tRNA + NAD(+) = uridine(20a) in tRNA + NADH + H(+). Functionally, catalyzes the synthesis of 5,6-dihydrouridine (D), a modified base found in the D-loop of most tRNAs, via the reduction of the C5-C6 double bond in target uridines. Specifically modifies U20 and U20a in tRNAs. The protein is tRNA-dihydrouridine(20/20a) synthase of Salmonella typhi.